We begin with the raw amino-acid sequence, 449 residues long: Dolichyl-diphosphooligosaccharide--protein glycosyltransferase 48 kDa subunit (449 aa).

Positions 1-18 are cleaved as a signal peptide; the sequence is MMWKALLIAVLAIAHCQA. At 19–412 the chain is on the lumenal side; the sequence is VLETDANTLV…ERFIPSAFPY (394 aa). Residues 413-433 form a helical membrane-spanning segment; the sequence is YTSAFSMMIGVFVFSFVFLHF. The Cytoplasmic segment spans residues 434-449; sequence KDEPVGRAAKEDKKSQ.

This sequence belongs to the DDOST 48 kDa subunit family. As to quaternary structure, component of the oligosaccharyltransferase (OST) complex.

Its subcellular location is the endoplasmic reticulum membrane. Its pathway is protein modification; protein glycosylation. Subunit of the oligosaccharyl transferase (OST) complex that catalyzes the initial transfer of a defined glycan (Glc(3)Man(9)GlcNAc(2) in eukaryotes) from the lipid carrier dolichol-pyrophosphate to an asparagine residue within an Asn-X-Ser/Thr consensus motif in nascent polypeptide chains, the first step in protein N-glycosylation. N-glycosylation occurs cotranslationally and the complex associates with the Sec61 complex at the channel-forming translocon complex that mediates protein translocation across the endoplasmic reticulum (ER). All subunits are required for a maximal enzyme activity. Required for the assembly of both SST3A- and SS3B-containing OST complexes. This Drosophila melanogaster (Fruit fly) protein is Dolichyl-diphosphooligosaccharide--protein glycosyltransferase 48 kDa subunit (Ost48).